The primary structure comprises 123 residues: Large ribosomal subunit protein uL14 (123 aa).

This sequence belongs to the universal ribosomal protein uL14 family. As to quaternary structure, part of the 50S ribosomal subunit. Forms a cluster with proteins L3 and L19. In the 70S ribosome, L14 and L19 interact and together make contacts with the 16S rRNA in bridges B5 and B8.

Binds to 23S rRNA. Forms part of two intersubunit bridges in the 70S ribosome. This Photobacterium profundum (strain SS9) protein is Large ribosomal subunit protein uL14.